Reading from the N-terminus, the 231-residue chain is Ribose-5-phosphate isomerase A (231 aa).

Substrate is bound by residues 28 to 31, 83 to 86, and 96 to 99; these read TGST, DGAD, and KGGG. Glutamate 105 serves as the catalytic Proton acceptor. Residue lysine 123 participates in substrate binding.

Belongs to the ribose 5-phosphate isomerase family. In terms of assembly, homodimer.

The catalysed reaction is aldehydo-D-ribose 5-phosphate = D-ribulose 5-phosphate. It participates in carbohydrate degradation; pentose phosphate pathway; D-ribose 5-phosphate from D-ribulose 5-phosphate (non-oxidative stage): step 1/1. Catalyzes the reversible conversion of ribose-5-phosphate to ribulose 5-phosphate. The protein is Ribose-5-phosphate isomerase A of Parvibaculum lavamentivorans (strain DS-1 / DSM 13023 / NCIMB 13966).